Consider the following 1063-residue polypeptide: Valine--tRNA ligase, mitochondrial (1063 aa).

The transit peptide at Met1 to His26 directs the protein to the mitochondrion. The interval Phe25–Glu53 is disordered. Basic and acidic residues predominate over residues Arg42 to Glu53. Residues Pro146–His156 carry the 'HIGH' region motif. Positions Lys658–Ser662 match the 'KMSKS' region motif. Position 661 (Lys661) interacts with ATP.

This sequence belongs to the class-I aminoacyl-tRNA synthetase family.

Its subcellular location is the mitochondrion. The enzyme catalyses tRNA(Val) + L-valine + ATP = L-valyl-tRNA(Val) + AMP + diphosphate. Its function is as follows. Catalyzes the attachment of valine to tRNA(Val) in a two-step reaction: valine is first activated by ATP to form Val-AMP and then transferred to the acceptor end of tRNA(Val). This Homo sapiens (Human) protein is Valine--tRNA ligase, mitochondrial (VARS2).